Here is a 220-residue protein sequence, read N- to C-terminus: Ribosomal RNA small subunit methyltransferase Nep1 (220 aa).

S-adenosyl-L-methionine-binding positions include glycine 178, glycine 183, and leucine 196–leucine 201.

It belongs to the class IV-like SAM-binding methyltransferase superfamily. RNA methyltransferase NEP1 family. As to quaternary structure, homodimer.

The catalysed reaction is a pseudouridine in rRNA + S-adenosyl-L-methionine = an N(1)-methylpseudouridine in rRNA + S-adenosyl-L-homocysteine + H(+). Methyltransferase involved in ribosomal biogenesis. Specifically catalyzes the N1-methylation of the pseudouridine corresponding to position 914 in M.jannaschii 16S rRNA. In Thermococcus kodakarensis (strain ATCC BAA-918 / JCM 12380 / KOD1) (Pyrococcus kodakaraensis (strain KOD1)), this protein is Ribosomal RNA small subunit methyltransferase Nep1.